A 929-amino-acid chain; its full sequence is LPS-assembly protein LptD (929 aa).

The signal sequence occupies residues 1–24; that stretch reads MKLRFIRSAGWLFLLFCLACNARA. The segment at 26-208 is disordered; it reads LPPLSSKPEQ…EAGDEKLRLA (183 aa). The segment covering 44-74 has biased composition (basic and acidic residues); sequence GDDKPVVIDTERIRGHHEYESGTRSESELRS. The segment covering 154–164 has biased composition (polar residues); sequence RTQSAPRTLSA. The span at 181–208 shows a compositional bias: basic and acidic residues; that stretch reads DQDRPGFAEGERIGGHREEAGDEKLRLA.

It belongs to the LptD family. As to quaternary structure, component of the lipopolysaccharide transport and assembly complex. Interacts with LptE and LptA.

Its subcellular location is the cell outer membrane. Functionally, together with LptE, is involved in the assembly of lipopolysaccharide (LPS) at the surface of the outer membrane. This chain is LPS-assembly protein LptD, found in Nitrosospira multiformis (strain ATCC 25196 / NCIMB 11849 / C 71).